A 215-amino-acid polypeptide reads, in one-letter code: Cytochrome b6 (215 aa).

A helical transmembrane segment spans residues 32 to 52 (IFYCLGGITLTCFLVQVATGF). Heme c is bound at residue cysteine 35. Heme b is bound by residues histidine 86 and histidine 100. Helical transmembrane passes span 90–110 (ASMMVLMMILHVFRVYLTGGF), 116–136 (LTWVTGVVLAVLTASFGVTGY), and 186–206 (LHTFVLPLLTAVFMLMHFPMI). The heme b site is built by histidine 187 and histidine 202.

Belongs to the cytochrome b family. PetB subfamily. The 4 large subunits of the cytochrome b6-f complex are cytochrome b6, subunit IV (17 kDa polypeptide, PetD), cytochrome f and the Rieske protein, while the 4 small subunits are PetG, PetL, PetM and PetN. The complex functions as a dimer. Heme b serves as cofactor. It depends on heme c as a cofactor.

The protein localises to the plastid. Its subcellular location is the chloroplast thylakoid membrane. In terms of biological role, component of the cytochrome b6-f complex, which mediates electron transfer between photosystem II (PSII) and photosystem I (PSI), cyclic electron flow around PSI, and state transitions. The chain is Cytochrome b6 from Saccharum hybrid (Sugarcane).